The primary structure comprises 67 residues: ORF2p protein (67 aa).

The interval 13 to 18 (WIGHPV) is important for viral replication in intestinal cells. A transmembrane helix spans residues 22–38 (AIIYPFVGFIPLSLKEV).

It is found in the host cytoplasmic vesicle membrane. Its function is as follows. Facilitates virus release from intestinal cells in vitro, possibly through the host autophagic pathway. The polypeptide is ORF2p protein (Homo sapiens (Human)).